Reading from the N-terminus, the 254-residue chain is Uridylate kinase (254 aa).

9-12 (KLSG) is an ATP binding site. G51 contributes to the UMP binding site. Positions 52 and 56 each coordinate ATP. Residues D72 and 133–140 (SGNPFFTT) each bind UMP. Positions 160, 166, and 169 each coordinate ATP.

The protein belongs to the UMP kinase family. In terms of assembly, homohexamer.

Its subcellular location is the cytoplasm. The catalysed reaction is UMP + ATP = UDP + ADP. It participates in pyrimidine metabolism; CTP biosynthesis via de novo pathway; UDP from UMP (UMPK route): step 1/1. With respect to regulation, inhibited by UTP. Its function is as follows. Catalyzes the reversible phosphorylation of UMP to UDP. The chain is Uridylate kinase from Synechococcus sp. (strain JA-3-3Ab) (Cyanobacteria bacterium Yellowstone A-Prime).